The primary structure comprises 431 residues: DNA polymerase delta subunit 3 (431 aa).

The necessary for function, possibly resulting from its inability to interact with PolD2 stretch occupies residues 64 to 80 (QGSDSGEDLYSVVLESR). The tract at residues 128-431 (PGAGKIVPSA…AGIMNFFSKK (304 aa)) is disordered. Low complexity predominate over residues 156-171 (SKSAVKLEPSKSSLKS). Composition is skewed to basic and acidic residues over residues 172 to 200 (EPAK…EQAS) and 252 to 271 (SPPE…NKKE). Residues 278–290 (PSPTKKPTTANTS) show a composition bias toward low complexity. Residues 294-307 (FDEESAESSDEEEK) are compositionally biased toward acidic residues. Basic and acidic residues-rich tracts occupy residues 308–328 (LDML…EKAS) and 343–362 (QPPK…KMDT). Positions 387–411 (PANKKVSPKAAAPVNKKKSPPSAAK) are enriched in low complexity.

Component of both the DNA polymerase delta and DNA polymerase zeta complexes. The DNA polymerase delta complex consists of three subunits: the catalytic subunit PolD1 and two accessory subunits PolD2/Pol31 and PolD3/Pol32. Within the delta complex, interacts with both PolD1 and PolD2. Component of the DNA polymerase zeta complex consisting of four subunits: the catalytic subunit PolZ1 and three accessory subunits PolZ2/Rev7, PolD2/Pol31 and PolD3/Pol32. As to expression, expressed in ovaries (at the protein level). Expressed in ovaries.

It localises to the nucleus. It is found in the nucleoplasm. Functionally, accessory component of the DNA polymerase delta complex and possibly the DNA polymerase zeta complex. As a component of the delta complex, participates in high fidelity genome replication, including lagging strand synthesis, DNA recombination and repair. Required to recruit the DNA polymerase delta complex to the nucleus of rapidly dividing embryonic cells, and as a consequence is essential for genome replication during the earliest cell cycles. Increases the efficiency and processivity of DNA synthesis of the DNA polymerases during mitotic DNA replication and repair. During development this function is essential for preventing replication stress that results in the formation of chromosomal fragile sites (CFS) such as chromosomal breaks. Ensures genomic stability by promoting several types of DNA repair mechanisms including repairing broken dicentric chromosomes through homolog-dependent break-induced replication (BIR). During homologous recombination (HR) repair, required for maintaining the processivity of the delta complex during break-induced replication; a form of HR that requires extensive DNA synthesis such as the repair of large gaps. Able to suppress position effect variegation and may therefore have a role in the induction of chromatin state changes that likely include its activities in DNA replication and repair. This chain is DNA polymerase delta subunit 3, found in Drosophila melanogaster (Fruit fly).